Here is an 864-residue protein sequence, read N- to C-terminus: Mitochondrial 15S rRNA processing factor CCM1 (864 aa).

A mitochondrion-targeting transit peptide spans 1 to 76 (MYMARCGPKN…REFSNTLKER (76 aa)). PPR repeat units lie at residues 319-353 (NKQNLTTVIQFYSRKEMTKQAWNTFDTMKFLSTKH) and 356-390 (DICTYNTMLRICEKERNFPKALDLFQEIQDHNIKP).

This sequence belongs to the CCM1 family. Binds to mitochondrial small subunit 15S rRNA.

Its subcellular location is the mitochondrion. Regulates mitochondrial small subunit maturation by controlling 15S rRNA 5'-end processing. Localizes to the 5' precursor of the 15S rRNA in a position that is subsequently occupied by mS47 in the mature yeast mtSSU. Uses structure and sequence-specific RNA recognition, binding to a single-stranded region of the precursor and specifically recognizing bases -6 to -1. The exchange of Ccm1 for mS47 is coupled to the irreversible removal of precursor rRNA that is accompanied by conformational changes of the mitoribosomal proteins uS5m and mS26. These conformational changes signal completion of 5'-end rRNA processing through protection of the mature 5'-end of the 15S rRNA and stabilization of mS47. The removal of the 5' precursor together with the dissociation of Ccm1 may be catalyzed by the 5'-3' exoribonuclease Pet127. Involved in the specific removal of group I introns in mitochondrial encoded transcripts. The chain is Mitochondrial 15S rRNA processing factor CCM1 (CCM1) from Saccharomyces cerevisiae (strain JAY291) (Baker's yeast).